The primary structure comprises 132 residues: Interleukin-5 (132 aa).

The first 19 residues, 1 to 19 (MRMLLCLNVLTLSCVWAIA), serve as a signal peptide directing secretion. N-linked (GlcNAc...) asparagine glycosylation is found at N45, N74, and N88.

This sequence belongs to the IL-5 family. As to quaternary structure, homodimer; disulfide-linked. Interacts with IL5RA. Interacts with CSF2RB.

The protein localises to the secreted. In terms of biological role, homodimeric cytokine expressed predominantly by T-lymphocytes and NK cells that plays an important role in the survival, differentiation, and chemotaxis of eosinophils. Acts also on activated and resting B-cells to induce immunoglobulin production, growth, and differentiation. Mechanistically, exerts its biological effects through a receptor composed of IL5RA subunit and the cytokine receptor common subunit beta/CSF2RB. Binding to the receptor leads to activation of various kinases including LYN, SYK and JAK2 and thereby propagates signals through the RAS-MAPK and JAK-STAT5 pathways respectively. This Rattus norvegicus (Rat) protein is Interleukin-5 (Il5).